The following is a 117-amino-acid chain: Swarming motility protein SwrAA (117 aa).

It is found in the cytoplasm. Required for swarm cell differentiation. Plays a crucial role in regulating the degree of cell flagellation. The chain is Swarming motility protein SwrAA (swrAA) from Bacillus subtilis (strain 168).